Consider the following 310-residue polypeptide: uncharacterized protein (310 aa).

The active site involves histidine 239.

This sequence belongs to the IUNH family.

Its subcellular location is the cytoplasm. The protein resides in the nucleus. This is an uncharacterized protein from Schizosaccharomyces pombe (strain 972 / ATCC 24843) (Fission yeast).